A 155-amino-acid polypeptide reads, in one-letter code: Ribosome maturation factor RimP (155 aa).

Belongs to the RimP family.

It localises to the cytoplasm. Required for maturation of 30S ribosomal subunits. The protein is Ribosome maturation factor RimP of Staphylococcus saprophyticus subsp. saprophyticus (strain ATCC 15305 / DSM 20229 / NCIMB 8711 / NCTC 7292 / S-41).